The primary structure comprises 763 residues: Phosphoglycerol transferase I (763 aa).

A run of 4 helical transmembrane segments spans residues 1-21, 26-46, 77-97, and 108-128; these read MSEL…AWKA, WWFA…ITLY, ILPG…LGWV, and FGYS…SPAF.

Belongs to the OpgB family.

It is found in the cell inner membrane. The catalysed reaction is a phosphatidylglycerol + a membrane-derived-oligosaccharide D-glucose = a 1,2-diacyl-sn-glycerol + a membrane-derived-oligosaccharide 6-(glycerophospho)-D-glucose.. Its pathway is glycan metabolism; osmoregulated periplasmic glucan (OPG) biosynthesis. In terms of biological role, transfers a phosphoglycerol residue from phosphatidylglycerol to the membrane-bound nascent glucan backbones. In Citrobacter koseri (strain ATCC BAA-895 / CDC 4225-83 / SGSC4696), this protein is Phosphoglycerol transferase I.